The sequence spans 258 residues: L-2,3-butanediol dehydrogenase (258 aa).

Residues 12–14 (QGI), Asp33, Gln37, 61–62 (DV), Asn88, Tyr154, Lys158, and 184–189 (PGIVGT) each bind NAD(+). Tyr154 serves as the catalytic Proton acceptor.

Belongs to the short-chain dehydrogenases/reductases (SDR) family. As to quaternary structure, homotetramer.

It carries out the reaction (S,S)-butane-2,3-diol + NAD(+) = (S)-acetoin + NADH + H(+). It catalyses the reaction (S)-acetoin + NAD(+) = diacetyl + NADH + H(+). Slightly activated by Ba(2+), Ca(2+), Mn(2+), Mg(2+), and Co(2+), while Hg(2+) and Cu(2+) cause marked inhibition of the activity. Ni(2+), Zn(2+) and Cd(2+) have no effect on the catalytic activity. Is also slightly inhibited by lactate, pyruvate, succinate, acetate and formate. Catalyzes the reversible reduction of (S)-acetoin to (S,S)-butane-2,3-diol (L-BD) in the presence of NADH. To a lesser extent, can also catalyze the irreversible reduction of diacetyl to (S)-acetoin. Cannot oxidize meso-BD, D-BD, 2-butanol, 1,2-propanediol, ethanol, acetol, 1,2-butanediol, 1,3-butanediol, n-butanol, and n-propanol. Cannot reduce (R)-acetoin, acetol, dihydroxyacetone and 2,4-pentanedione. The chain is L-2,3-butanediol dehydrogenase from Corynebacterium glutamicum (Brevibacterium saccharolyticum).